Consider the following 344-residue polypeptide: Uroporphyrinogen decarboxylase (344 aa).

Substrate is bound by residues 25–29 (RQAGR), Asp75, Tyr152, Ser207, and His323.

Belongs to the uroporphyrinogen decarboxylase family. In terms of assembly, homodimer.

The protein localises to the cytoplasm. It catalyses the reaction uroporphyrinogen III + 4 H(+) = coproporphyrinogen III + 4 CO2. The protein operates within porphyrin-containing compound metabolism; protoporphyrin-IX biosynthesis; coproporphyrinogen-III from 5-aminolevulinate: step 4/4. Functionally, catalyzes the decarboxylation of four acetate groups of uroporphyrinogen-III to yield coproporphyrinogen-III. The polypeptide is Uroporphyrinogen decarboxylase (Roseobacter denitrificans (strain ATCC 33942 / OCh 114) (Erythrobacter sp. (strain OCh 114))).